The following is a 116-amino-acid chain: uncharacterized protein (116 aa).

The N-terminal stretch at 1–15 (MKKYFLILASFMLVA) is a signal peptide.

This is an uncharacterized protein from Haemophilus influenzae (strain ATCC 51907 / DSM 11121 / KW20 / Rd).